A 309-amino-acid polypeptide reads, in one-letter code: Olfactory receptor 1L8 (309 aa).

The Extracellular segment spans residues 1–26 (MERINHTSSVSEFILLGLSSRPEDQK). Asn5 carries N-linked (GlcNAc...) asparagine glycosylation. Residues 27 to 50 (TLFVLFLIVYLVTITGNLLIILAI) form a helical membrane-spanning segment. The Cytoplasmic portion of the chain corresponds to 51 to 58 (RFNPHLQT). A helical transmembrane segment spans residues 59–80 (PMYFFLSFLSLTDICFTTSVVP). Residues 81–101 (KMLMNFLSEKKTISYAGCLTQ) are Extracellular-facing. A disulfide bridge links Cys98 with Cys190. Residues 102–121 (MYFLYALGNSDSCLLAVMAF) traverse the membrane as a helical segment. At 122–140 (DRYVAVCDPFHYVTTMSHH) the chain is on the cytoplasmic side. The chain crosses the membrane as a helical span at residues 141-159 (HCVLLVAFSCSFPHLHSLL). Residues 160-197 (HTLLLNRLTFCDSNVIHHFLCDLSPVLKLSCSSIFVNE) lie on the Extracellular side of the membrane. Residues 198–220 (IVQMTEAPIVLVTRFLCIAFSYI) traverse the membrane as a helical segment. The Cytoplasmic portion of the chain corresponds to 221-237 (RILTTVLKIPSTSGKRK). The helical transmembrane segment at 238-260 (AFSTCGFYLTVVTLFYGSIFCVY) threads the bilayer. The Extracellular segment spans residues 261-272 (LQPPSTYAVKDH). A helical transmembrane segment spans residues 273 to 292 (VATIVYTVLSSMLNPFIYSL). Topologically, residues 293–309 (RNKDLKQGLRKLMSKRS) are cytoplasmic.

The protein belongs to the G-protein coupled receptor 1 family.

It localises to the cell membrane. Functionally, odorant receptor. This Homo sapiens (Human) protein is Olfactory receptor 1L8 (OR1L8).